Reading from the N-terminus, the 76-residue chain is UPF0291 protein BA_1897/GBAA_1897/BAS1759 (76 aa).

Belongs to the UPF0291 family.

Its subcellular location is the cytoplasm. The polypeptide is UPF0291 protein BA_1897/GBAA_1897/BAS1759 (Bacillus anthracis).